A 130-amino-acid polypeptide reads, in one-letter code: Phosphoribosyl-AMP cyclohydrolase (130 aa).

Position 78 (Asp78) interacts with Mg(2+). Position 79 (Cys79) interacts with Zn(2+). Residues Asp80 and Asp82 each contribute to the Mg(2+) site. The Zn(2+) site is built by Cys96 and Cys103.

The protein belongs to the PRA-CH family. As to quaternary structure, homodimer. It depends on Mg(2+) as a cofactor. Zn(2+) serves as cofactor.

Its subcellular location is the cytoplasm. It carries out the reaction 1-(5-phospho-beta-D-ribosyl)-5'-AMP + H2O = 1-(5-phospho-beta-D-ribosyl)-5-[(5-phospho-beta-D-ribosylamino)methylideneamino]imidazole-4-carboxamide. Its pathway is amino-acid biosynthesis; L-histidine biosynthesis; L-histidine from 5-phospho-alpha-D-ribose 1-diphosphate: step 3/9. Functionally, catalyzes the hydrolysis of the adenine ring of phosphoribosyl-AMP. This chain is Phosphoribosyl-AMP cyclohydrolase, found in Nitrosospira multiformis (strain ATCC 25196 / NCIMB 11849 / C 71).